The following is a 287-amino-acid chain: 4-diphosphocytidyl-2-C-methyl-D-erythritol kinase (287 aa).

The active site involves K10. 94-104 serves as a coordination point for ATP; that stretch reads PVAAGLGGGSA. D136 is a catalytic residue.

This sequence belongs to the GHMP kinase family. IspE subfamily.

It carries out the reaction 4-CDP-2-C-methyl-D-erythritol + ATP = 4-CDP-2-C-methyl-D-erythritol 2-phosphate + ADP + H(+). The protein operates within isoprenoid biosynthesis; isopentenyl diphosphate biosynthesis via DXP pathway; isopentenyl diphosphate from 1-deoxy-D-xylulose 5-phosphate: step 3/6. Its function is as follows. Catalyzes the phosphorylation of the position 2 hydroxy group of 4-diphosphocytidyl-2C-methyl-D-erythritol. The polypeptide is 4-diphosphocytidyl-2-C-methyl-D-erythritol kinase (Pelotomaculum thermopropionicum (strain DSM 13744 / JCM 10971 / SI)).